Reading from the N-terminus, the 431-residue chain is MHRALLNASRRVATVRSMASTVEGDAFRLSEYSSKYLGHRKAAFTEKLEIVNADDTPALPIYRVTNAVGDVIDKSQDPNFDEQTSLKMYKTMTQLNIMDRILYDSQRQGRISFYMTSFGEEGNHVGSAAALEPQDLIYGQYREAGVLLWRGYTMENFMNQCYGNADDLGKGRQMPMHFGTKERNFVTISSPLTTQLPQAVGSAYAFKQQKDNNRIAVVYFGDGAASEGDAHAAFNFAATLKCPIIFFCRNNGYAISTPTSEQYGGDGIAGKGPAYGLHTIRVDGNDLLAVYNATKEARRVALTNRPVLIEAMTYRLGHHSTSDDSTAYRSSDEVQTWGDKDHPITRFKKYITERGWWNEEKEMEWQKEVKKRVLTEFAAAEKRKKAHYHDLFEDVYDELPLRLRRQRDELDAHVAEYKEHYPMLETLQSKP.

140 to 142 is a binding site for thiamine diphosphate; it reads QYR. K(+)-binding residues include Ser-189, Thr-194, and Gln-195.

It belongs to the BCKDHA family. The cofactor is thiamine diphosphate.

It is found in the mitochondrion matrix. The enzyme catalyses N(6)-[(R)-lipoyl]-L-lysyl-[protein] + 3-methyl-2-oxobutanoate + H(+) = N(6)-[(R)-S(8)-2-methylpropanoyldihydrolipoyl]-L-lysyl-[protein] + CO2. It participates in lipid metabolism; fatty acid biosynthesis. Functionally, the branched-chain alpha-keto dehydrogenase complex catalyzes the overall conversion of alpha-keto acids to acyl-CoA and CO(2). It contains multiple copies of three enzymatic components: branched-chain alpha-keto acid decarboxylase (E1), lipoamide acyltransferase (E2) and lipoamide dehydrogenase (E3). Required for the production of the monomethyl branched-chain fatty acids (mmBCFAs) isopentadecanoate (C15iso) and isoheptadecanoate (C17iso). This Caenorhabditis elegans protein is 2-oxoisovalerate dehydrogenase subunit alpha, mitochondrial.